We begin with the raw amino-acid sequence, 112 residues long: Transcriptional regulator WhiD (112 aa).

A 4Fe-4S Wbl-type domain is found at A22–E86. 4 residues coordinate [4Fe-4S] cluster: C23, C53, C56, and C62.

Belongs to the WhiB family. In terms of assembly, the 4Fe-4S form is a monomer; upon oxidation forms a disulfide-bonded homodimer. The cofactor is [4Fe-4S] cluster. Post-translationally, can be nitrosylated by NO, 8 NO react per cluster. These complexes are quite stable under anaerobic conditions, but degrade slowly aerobically. In terms of processing, upon Fe-S cluster removal intramolecular disulfide bonds are formed.

The protein resides in the cytoplasm. Its function is as follows. Acts as a transcriptional regulator. Probably redox-responsive. The apo- but not holo-form probably binds DNA. Plays a positive role in prespore maturation and the initiation of sporulation septation. This Streptomyces coelicolor (strain ATCC BAA-471 / A3(2) / M145) protein is Transcriptional regulator WhiD (whiD).